Reading from the N-terminus, the 124-residue chain is Small ribosomal subunit protein bS6 (124 aa).

The segment at 97–124 is disordered; the sequence is TGPSPMMKEVQREEAKKAAAAQPTEAQA. The segment covering 114 to 124 has biased composition (low complexity); sequence AAAAQPTEAQA.

Belongs to the bacterial ribosomal protein bS6 family.

Functionally, binds together with bS18 to 16S ribosomal RNA. This Paraburkholderia phymatum (strain DSM 17167 / CIP 108236 / LMG 21445 / STM815) (Burkholderia phymatum) protein is Small ribosomal subunit protein bS6.